The sequence spans 251 residues: Ubiquinone/menaquinone biosynthesis C-methyltransferase UbiE (251 aa).

S-adenosyl-L-methionine contacts are provided by residues T74, D95, 123–124 (NA), and S140.

The protein belongs to the class I-like SAM-binding methyltransferase superfamily. MenG/UbiE family.

The catalysed reaction is a 2-demethylmenaquinol + S-adenosyl-L-methionine = a menaquinol + S-adenosyl-L-homocysteine + H(+). It carries out the reaction a 2-methoxy-6-(all-trans-polyprenyl)benzene-1,4-diol + S-adenosyl-L-methionine = a 5-methoxy-2-methyl-3-(all-trans-polyprenyl)benzene-1,4-diol + S-adenosyl-L-homocysteine + H(+). It functions in the pathway quinol/quinone metabolism; menaquinone biosynthesis; menaquinol from 1,4-dihydroxy-2-naphthoate: step 2/2. It participates in cofactor biosynthesis; ubiquinone biosynthesis. Its function is as follows. Methyltransferase required for the conversion of demethylmenaquinol (DMKH2) to menaquinol (MKH2) and the conversion of 2-polyprenyl-6-methoxy-1,4-benzoquinol (DDMQH2) to 2-polyprenyl-3-methyl-6-methoxy-1,4-benzoquinol (DMQH2). The protein is Ubiquinone/menaquinone biosynthesis C-methyltransferase UbiE of Pectobacterium carotovorum subsp. carotovorum (strain PC1).